The chain runs to 392 residues: DNA replication and repair protein RecF (392 aa).

30-37 (GPNAAGKT) contacts ATP.

It belongs to the RecF family.

It is found in the cytoplasm. Its function is as follows. The RecF protein is involved in DNA metabolism; it is required for DNA replication and normal SOS inducibility. RecF binds preferentially to single-stranded, linear DNA. It also seems to bind ATP. The chain is DNA replication and repair protein RecF from Chloroflexus aggregans (strain MD-66 / DSM 9485).